We begin with the raw amino-acid sequence, 247 residues long: Homeobox-leucine zipper protein HOX17 (247 aa).

The disordered stretch occupies residues 58–81 (ERAGLRGGGGSDEEDGGCGIDGSR). A DNA-binding region (homeobox) is located at residues 79–138 (GSRKKLRLSKDQSAVLEDSFREHPTLNPRQKATLAQQLGLRPRQVEVWFQNRRARTKLKQ). The leucine-zipper stretch occupies residues 137–182 (KQTEVDCEFLKRCCETLTEENRRLQKEVQELRALKLVSPHLYMNMS).

This sequence belongs to the HD-ZIP homeobox family. Class II subfamily. Expressed in seedlings, roots, stems, leaf sheaths and blades and panicles.

It localises to the nucleus. Functionally, probable transcription factor. This chain is Homeobox-leucine zipper protein HOX17 (HOX17), found in Oryza sativa subsp. japonica (Rice).